We begin with the raw amino-acid sequence, 79 residues long: Small ribosomal subunit protein bS18 (79 aa).

This sequence belongs to the bacterial ribosomal protein bS18 family. Part of the 30S ribosomal subunit. Forms a tight heterodimer with protein bS6.

Its function is as follows. Binds as a heterodimer with protein bS6 to the central domain of the 16S rRNA, where it helps stabilize the platform of the 30S subunit. In Streptococcus suis (strain 98HAH33), this protein is Small ribosomal subunit protein bS18.